A 265-amino-acid chain; its full sequence is Type III pantothenate kinase (265 aa).

ATP is bound at residue 6–13 (DVGNTHTV). Substrate is bound at residue 112–115 (GADR). Asp114 acts as the Proton acceptor in catalysis. A K(+)-binding site is contributed by Asp134. ATP is bound at residue Thr137. Position 189 (Thr189) interacts with substrate.

The protein belongs to the type III pantothenate kinase family. As to quaternary structure, homodimer. It depends on NH4(+) as a cofactor. K(+) serves as cofactor.

The protein localises to the cytoplasm. It carries out the reaction (R)-pantothenate + ATP = (R)-4'-phosphopantothenate + ADP + H(+). It functions in the pathway cofactor biosynthesis; coenzyme A biosynthesis; CoA from (R)-pantothenate: step 1/5. In terms of biological role, catalyzes the phosphorylation of pantothenate (Pan), the first step in CoA biosynthesis. This is Type III pantothenate kinase from Streptomyces coelicolor (strain ATCC BAA-471 / A3(2) / M145).